Here is a 262-residue protein sequence, read N- to C-terminus: Glycerol uptake facilitator protein (262 aa).

Residues 1-7 (MNFCSKK) lie on the Cytoplasmic side of the membrane. Residues 8–36 (KILKQCFFEFLGTGLIIFLGISSLVVSKL) form a helical membrane-spanning segment. The Extracellular segment spans residues 37–41 (TNFHF). The chain crosses the membrane as a helical span at residues 42–62 (NHCEISCIWGLGVFISICFCS). At 63 to 65 (SVS) the chain is on the cytoplasmic side. The stretch at 66 to 69 (GAHL) is an intramembrane region. The NPA 1 motif lies at 70–72 (NPA). Residues 70–80 (NPAITIFLFLS) constitute an intramembrane region (helical). The Cytoplasmic portion of the chain corresponds to 81–86 (SQFNKK). Residues 87 to 110 (KVIPYILSQISGTFFFTFLIYLIF) form a helical membrane-spanning segment. Over 111–145 (NNLLNSFESKYNIVRGTKKSLELASLFCVFPKENY) the chain is Extracellular. The chain crosses the membrane as a helical span at residues 146 to 171 (NFIHDFILEILIGIIFIIILMKLSEK). The Cytoplasmic segment spans residues 172–180 (NNLFKFYKF). A helical membrane pass occupies residues 181 to 197 (INPFLIGTLVIIINLFL). At 198–201 (TSYS) the chain is on the extracellular side. An intramembrane segment occupies 202–205 (NITL). Positions 206–208 (NPA) match the NPA 2 motif. The helical intramembrane region spans 206 to 219 (NPARDLGPRIFLSL). Topologically, residues 220 to 234 (IGWGKLAFTGDDNII) are extracellular. A helical transmembrane segment spans residues 235-259 (FPYFLIPTIAPIIGINLGGWIYILY). Topologically, residues 260–262 (IKK) are cytoplasmic.

The protein belongs to the MIP/aquaporin (TC 1.A.8) family.

It localises to the cell membrane. The enzyme catalyses glycerol(in) = glycerol(out). Its function is as follows. Mediates glycerol diffusion across the cytoplasmic membrane via a pore-type mechanism. In Buchnera aphidicola subsp. Schizaphis graminum (strain Sg), this protein is Glycerol uptake facilitator protein (glpF).